Here is a 217-residue protein sequence, read N- to C-terminus: Small ribosomal subunit protein uS3c (217 aa).

Positions 39–109 constitute a KH type-2 domain; sequence IRNFLRTKLI…RFRITITYIP (71 aa).

This sequence belongs to the universal ribosomal protein uS3 family. As to quaternary structure, part of the 30S ribosomal subunit.

The protein localises to the plastid. The protein resides in the chloroplast. The sequence is that of Small ribosomal subunit protein uS3c (rps3) from Chlorokybus atmophyticus (Soil alga).